The following is a 312-amino-acid chain: Peptide methionine sulfoxide reductase MsrA/MsrB 1 (312 aa).

The interval methionine 1 to threonine 155 is peptide methionine sulfoxide reductase. Cysteine 10 is a catalytic residue. The 124-residue stretch at glutamine 172–lysine 295 folds into the MsrB domain. Cysteine 284 serves as the catalytic Nucleophile.

This sequence in the N-terminal section; belongs to the MsrA Met sulfoxide reductase family. It in the C-terminal section; belongs to the MsrB Met sulfoxide reductase family.

It localises to the cell membrane. It catalyses the reaction L-methionyl-[protein] + [thioredoxin]-disulfide + H2O = L-methionyl-(S)-S-oxide-[protein] + [thioredoxin]-dithiol. It carries out the reaction [thioredoxin]-disulfide + L-methionine + H2O = L-methionine (S)-S-oxide + [thioredoxin]-dithiol. The enzyme catalyses L-methionyl-[protein] + [thioredoxin]-disulfide + H2O = L-methionyl-(R)-S-oxide-[protein] + [thioredoxin]-dithiol. In terms of biological role, has an important function as a repair enzyme for proteins that have been inactivated by oxidation. Catalyzes the reversible oxidation-reduction of methionine sulfoxide in proteins to methionine. The chain is Peptide methionine sulfoxide reductase MsrA/MsrB 1 (msrAB1) from Streptococcus pneumoniae serotype 4 (strain ATCC BAA-334 / TIGR4).